Consider the following 1342-residue polypeptide: DNA-directed RNA polymerase subunit beta (1342 aa).

It belongs to the RNA polymerase beta chain family. The RNAP catalytic core consists of 2 alpha, 1 beta, 1 beta' and 1 omega subunit. When a sigma factor is associated with the core the holoenzyme is formed, which can initiate transcription.

It carries out the reaction RNA(n) + a ribonucleoside 5'-triphosphate = RNA(n+1) + diphosphate. In terms of biological role, DNA-dependent RNA polymerase catalyzes the transcription of DNA into RNA using the four ribonucleoside triphosphates as substrates. In Salmonella gallinarum (strain 287/91 / NCTC 13346), this protein is DNA-directed RNA polymerase subunit beta.